A 955-amino-acid polypeptide reads, in one-letter code: Coiled-coil domain-containing protein 146 (955 aa).

Acidic residues predominate over residues 1 to 17; that stretch reads MEDSSTDTEKEEEEEKD. Residues 1 to 22 are disordered; it reads MEDSSTDTEKEEEEEKDEKDQE. Coiled-coil stretches lie at residues 114-141, 169-321, 400-461, 534-640, and 667-832; these read EAFSTEVSKMREQLLKYQNEYNAVKERE, GEME…AREN, STLS…LLRM, KAHQ…RNES, and NGEI…MKQA.

As to quaternary structure, interacts with CCDC38 and CCDC42. Interacts with intraflagellar transport proteins IFT20 and IFT88. In terms of assembly, (Microbial infection) Interacts with Chlamydia trachomatis incM/YT288. In host cells infected with C.trachomatis incM, CCDC146 is recruited to the periphery of the pathogen-containing vacuole but recruitment is not dependent on incM. Widely expressed.

Its subcellular location is the cytoplasm. The protein resides in the cytoskeleton. It localises to the microtubule organizing center. It is found in the centrosome. The protein localises to the centriole. Its subcellular location is the flagellum axoneme. The protein resides in the cilium basal body. It localises to the midbody. Functionally, essential for sperm flagellum biogenesis and male fertility. The protein is Coiled-coil domain-containing protein 146 (CCDC146) of Homo sapiens (Human).